We begin with the raw amino-acid sequence, 164 residues long: Putative deoxyuridine 5'-triphosphate nucleotidohydrolase (164 aa).

65–67 (RSG) contacts substrate. At Lys-71 the chain carries N6-acetyllysine; by host. Substrate contacts are provided by residues 79–82 (GVVD), Gly-90, and 138–139 (YG).

The protein belongs to the dUTPase family. Mg(2+) serves as cofactor.

The catalysed reaction is dUTP + H2O = dUMP + diphosphate + H(+). This enzyme is involved in nucleotide metabolism: it produces dUMP, the immediate precursor of thymidine nucleotides and it decreases the intracellular concentration of dUTP so that uracil cannot be incorporated into DNA. The chain is Putative deoxyuridine 5'-triphosphate nucleotidohydrolase from Dryophytes versicolor (chameleon treefrog).